Reading from the N-terminus, the 363-residue chain is Chorismate synthase (363 aa).

The NADP(+) site is built by R48 and R54. FMN contacts are provided by residues 125 to 127, 238 to 239, G278, 293 to 297, and R319; these read RSS, NA, and KPTSS.

Belongs to the chorismate synthase family. Homotetramer. FMNH2 is required as a cofactor.

The enzyme catalyses 5-O-(1-carboxyvinyl)-3-phosphoshikimate = chorismate + phosphate. The protein operates within metabolic intermediate biosynthesis; chorismate biosynthesis; chorismate from D-erythrose 4-phosphate and phosphoenolpyruvate: step 7/7. Its function is as follows. Catalyzes the anti-1,4-elimination of the C-3 phosphate and the C-6 proR hydrogen from 5-enolpyruvylshikimate-3-phosphate (EPSP) to yield chorismate, which is the branch point compound that serves as the starting substrate for the three terminal pathways of aromatic amino acid biosynthesis. This reaction introduces a second double bond into the aromatic ring system. The polypeptide is Chorismate synthase (Acidithiobacillus ferrooxidans (strain ATCC 23270 / DSM 14882 / CIP 104768 / NCIMB 8455) (Ferrobacillus ferrooxidans (strain ATCC 23270))).